A 394-amino-acid polypeptide reads, in one-letter code: Acetate kinase (394 aa).

Position 10 (Asn-10) interacts with Mg(2+). Lys-17 is an ATP binding site. Arg-87 lines the substrate pocket. Asp-144 acts as the Proton donor/acceptor in catalysis. Residues 204–208, 279–281, and 327–331 each bind ATP; these read HLGNG, DMR, and GIGEN. A Mg(2+)-binding site is contributed by Glu-381.

The protein belongs to the acetokinase family. Homodimer. It depends on Mg(2+) as a cofactor. Mn(2+) is required as a cofactor.

It is found in the cytoplasm. It carries out the reaction acetate + ATP = acetyl phosphate + ADP. The protein operates within metabolic intermediate biosynthesis; acetyl-CoA biosynthesis; acetyl-CoA from acetate: step 1/2. In terms of biological role, catalyzes the formation of acetyl phosphate from acetate and ATP. Can also catalyze the reverse reaction. This chain is Acetate kinase, found in Pseudomonas aeruginosa (strain LESB58).